Reading from the N-terminus, the 372-residue chain is MLANSSSTNSSVLPCPDYRPTHRLHLVVYSLVLAAGLPLNALALWVFLRALRVHSVVSVYMCNLAASDLLFTLSLPVRLSYYALHHWPFPDLLCQTTGAIFQMNMYGSCIFLMLINVDRYAAIVHPLRLRHLRRPRVARLLCLGVWALILVFAVPAARVHRPSRCRYRDLEVRLCFESFSDELWKGRLLPLVLLAEALGFLLPLAAVVYSSGRVFWTLARPDATQSQRRRKTVRLLLANLVIFLLCFVPYNSTLAVYGLLRSKLVAASVPARDRVRGVLMVMVLLAGANCVLDPLVYYFSAEGFRNTLRGLGTPHRARTSATNGTRAALAQSERSAVTTDATRPDAASQGLLRPSDSHSLSSFTQCPQDSAL.

The Extracellular segment spans residues 1-26 (MLANSSSTNSSVLPCPDYRPTHRLHL). Asn-4 and Asn-9 each carry an N-linked (GlcNAc...) asparagine glycan. Residues 27–47 (VVYSLVLAAGLPLNALALWVF) form a helical membrane-spanning segment. The Cytoplasmic portion of the chain corresponds to 48–55 (LRALRVHS). Residues 56 to 76 (VVSVYMCNLAASDLLFTLSLP) traverse the membrane as a helical segment. Residues 77–96 (VRLSYYALHHWPFPDLLCQT) lie on the Extracellular side of the membrane. Cys-94 and Cys-175 are disulfide-bonded. The helical transmembrane segment at 97–117 (TGAIFQMNMYGSCIFLMLINV) threads the bilayer. Over 118–136 (DRYAAIVHPLRLRHLRRPR) the chain is Cytoplasmic. The helical transmembrane segment at 137–157 (VARLLCLGVWALILVFAVPAA) threads the bilayer. The Extracellular portion of the chain corresponds to 158 to 187 (RVHRPSRCRYRDLEVRLCFESFSDELWKGR). A helical transmembrane segment spans residues 188–208 (LLPLVLLAEALGFLLPLAAVV). At 209-239 (YSSGRVFWTLARPDATQSQRRRKTVRLLLAN) the chain is on the cytoplasmic side. The helical transmembrane segment at 240–260 (LVIFLLCFVPYNSTLAVYGLL) threads the bilayer. The Extracellular segment spans residues 261–276 (RSKLVAASVPARDRVR). A helical membrane pass occupies residues 277-297 (GVLMVMVLLAGANCVLDPLVY). The Cytoplasmic portion of the chain corresponds to 298–372 (YFSAEGFRNT…FTQCPQDSAL (75 aa)). The segment at 312–372 (GTPHRARTSA…FTQCPQDSAL (61 aa)) is disordered. 2 stretches are compositionally biased toward polar residues: residues 332–341 (SERSAVTTDA) and 357–372 (SHSLSSFTQCPQDSAL).

The protein belongs to the G-protein coupled receptor 1 family. In terms of tissue distribution, not expressed in frontal cortex, basal forebrain, caudate putamen, thalamus, or hippocampus.

The protein localises to the cell membrane. In terms of biological role, receptor for lysophosphatidic acid (LPA), a mediator of diverse cellular activities. This chain is Lysophosphatidic acid receptor 5 (LPAR5), found in Homo sapiens (Human).